Here is a 588-residue protein sequence, read N- to C-terminus: FACT complex subunit POB3 (588 aa).

Disordered stretches follow at residues 185 to 205 (MKKA…DEEG) and 469 to 588 (VDID…DDDE). The span at 469–486 (VDIDEPFSDDDEEMESPS) shows a compositional bias: acidic residues. Positions 487 to 500 (EDERPSKAKNDKSK) are enriched in basic and acidic residues. Positions 509–525 (DDDEDESDDEDFEDESS) are enriched in acidic residues. Residues 573–588 (EDEKPKKKKAKKDDDE) are compositionally biased toward basic and acidic residues.

The protein belongs to the SSRP1 family. As to quaternary structure, forms a stable heterodimer with SPT16. The SPT16-POB3 dimer weakly associates with multiple molecules of NHP6 to form the FACT complex.

The protein localises to the nucleus. It localises to the chromosome. Functionally, component of the FACT complex, a general chromatin factor that acts to reorganize nucleosomes. The FACT complex is involved in multiple processes that require DNA as a template such as mRNA elongation, DNA replication and DNA repair. During transcription elongation the FACT complex acts as a histone chaperone that both destabilizes and restores nucleosomal structure. It facilitates the passage of RNA polymerase II and transcription by promoting the dissociation of one histone H2A-H2B dimer from the nucleosome, then subsequently promotes the reestablishment of the nucleosome following the passage of RNA polymerase II. This is FACT complex subunit POB3 (POB3) from Cryptococcus neoformans var. neoformans serotype D (strain B-3501A) (Filobasidiella neoformans).